The sequence spans 919 residues: Protein phosphatase 1 regulatory subunit 37 (919 aa).

LRR repeat units lie at residues 340–361, 368–388, 396–417, 425–445, 454–474, and 482–502; these read SLQYLDARNTPLLDHSAPFVAR, SLTVLHLENSGISGRPLMLLA, NLRELYLAENKLNGLQDSAQLG, NIQILDLRNNHILDSGLAYVC, GLVTLVLWNNQLTHNGMGYLA, and SLETLNLGHNAVGNEGVHKLK. 2 disordered regions span residues 626–716 and 790–866; these read ATED…TIPS and APSQ…APLP. Positions 631 to 640 are enriched in acidic residues; sequence THEEEEEEEA. The segment covering 641 to 658 has biased composition (basic and acidic residues); it reads SPLKKIEEETTDALKDAT. Residues 677 to 690 are compositionally biased toward acidic residues; that stretch reads PQDDSDSDTEDEET. Positions 691–701 are enriched in low complexity; the sequence is PTNTSLTSTSP. Composition is skewed to polar residues over residues 791–801 and 811–837; these read PSQTQNSTQPT and DAQQEDSVSTSTPSLDANIDQTQLTES. The stretch at 833-861 forms a coiled coil; it reads QLTESVSEEEQKKAETLNNEADINEDANT.

The protein belongs to the PPP1R37 family.

May inhibit phosphatase activity of protein phosphatase 1 (PP1) complexes. This Danio rerio (Zebrafish) protein is Protein phosphatase 1 regulatory subunit 37 (ppp1r37).